A 73-amino-acid chain; its full sequence is UPF0435 protein OB1527 (73 aa).

Belongs to the UPF0435 family.

This is UPF0435 protein OB1527 from Oceanobacillus iheyensis (strain DSM 14371 / CIP 107618 / JCM 11309 / KCTC 3954 / HTE831).